A 144-amino-acid chain; its full sequence is Endoribonuclease YbeY (144 aa).

Positions 105, 109, and 115 each coordinate Zn(2+).

This sequence belongs to the endoribonuclease YbeY family. Requires Zn(2+) as cofactor.

The protein resides in the cytoplasm. Functionally, single strand-specific metallo-endoribonuclease involved in late-stage 70S ribosome quality control and in maturation of the 3' terminus of the 16S rRNA. The protein is Endoribonuclease YbeY of Chlorobium limicola (strain DSM 245 / NBRC 103803 / 6330).